Reading from the N-terminus, the 146-residue chain is MPRPTTSSPSQRMLRVAEQVRHALSETLQRGEIIDPLIENTVVSVSEVRMSPDLRVATAFVSPLGAKDTDAVVEALNKHAKFVRGRVSGALRQMKFMPEFRFKLDTSFDNFARINDLLKSPEVARDLDADDDKTKDDRAKDDKDSE.

The tract at residues 125 to 146 (RDLDADDDKTKDDRAKDDKDSE) is disordered.

Belongs to the RbfA family. In terms of assembly, monomer. Binds 30S ribosomal subunits, but not 50S ribosomal subunits or 70S ribosomes.

Its subcellular location is the cytoplasm. In terms of biological role, one of several proteins that assist in the late maturation steps of the functional core of the 30S ribosomal subunit. Associates with free 30S ribosomal subunits (but not with 30S subunits that are part of 70S ribosomes or polysomes). Required for efficient processing of 16S rRNA. May interact with the 5'-terminal helix region of 16S rRNA. The polypeptide is Ribosome-binding factor A (Mesorhizobium japonicum (strain LMG 29417 / CECT 9101 / MAFF 303099) (Mesorhizobium loti (strain MAFF 303099))).